Consider the following 277-residue polypeptide: UPF0496 protein At3g48650 (277 aa).

2 consecutive transmembrane segments (helical) span residues 124–144 and 145–165; these read YIFFAAALLSVLALWIYLGAV and SLVVAAKVVIEVATPSIAPLW.

This sequence belongs to the UPF0496 family.

It localises to the membrane. This chain is UPF0496 protein At3g48650, found in Arabidopsis thaliana (Mouse-ear cress).